Here is a 436-residue protein sequence, read N- to C-terminus: RNA polymerase sigma-54 factor (436 aa).

The H-T-H motif DNA-binding region spans Thr324–Ile343. The RPON box signature appears at Ser413–Arg421.

Belongs to the sigma-54 factor family. Interacts transiently with the RNAP core.

In terms of biological role, sigma factors are initiation factors that promote the attachment of RNA polymerase (RNAP) to specific initiation sites and are then released. This sigma factor is responsible for the expression of the levanase operon. The open complex (sigma-54 and core RNA polymerase) serves as the receptor for receipt of the melting signal from the remotely bound activator protein LevR for the expression of the levanase operon. Associates with the RNAP core only in stationary phase cells. This is RNA polymerase sigma-54 factor (sigL) from Bacillus subtilis (strain 168).